The primary structure comprises 249 residues: MLVIPAIDLKDGQCVRLKQGRMDDSTTYGDDPVAMAARWVETGARRLHLVDLNGAFEGKPVNAEAVTAIARAYPDLPIQIGGGIRTAETIEAYLEAGVSYVIIGTQAVKEPAFVGEMCRRFPGHVIVGLDARDGYVATDGWAEVSTLKAVDLAKRFADDGVSSIVYTDIARDGMMQGVNIAATAELAREGGLPVIASGGVTHLGDIEALLEVADAGILGAITGRAIYEGKLDVAEAQRLCDAQLATRRS.

Residue Asp-8 is the Proton acceptor of the active site. Catalysis depends on Asp-130, which acts as the Proton donor.

The protein belongs to the HisA/HisF family.

Its subcellular location is the cytoplasm. The catalysed reaction is 1-(5-phospho-beta-D-ribosyl)-5-[(5-phospho-beta-D-ribosylamino)methylideneamino]imidazole-4-carboxamide = 5-[(5-phospho-1-deoxy-D-ribulos-1-ylimino)methylamino]-1-(5-phospho-beta-D-ribosyl)imidazole-4-carboxamide. The protein operates within amino-acid biosynthesis; L-histidine biosynthesis; L-histidine from 5-phospho-alpha-D-ribose 1-diphosphate: step 4/9. The polypeptide is 1-(5-phosphoribosyl)-5-[(5-phosphoribosylamino)methylideneamino] imidazole-4-carboxamide isomerase (Chromohalobacter salexigens (strain ATCC BAA-138 / DSM 3043 / CIP 106854 / NCIMB 13768 / 1H11)).